Reading from the N-terminus, the 499-residue chain is MSNNWKSVRLRLQNRTLVFLLVILSFGSCYSLKSQGDGFLESVTKDLWSDIDAEDLRAVGFHRKLLGRFRNPYTHLNAFRDRPVARATPPSSSVSTRPDAKRSSTLPPPQKSPPAQHVSAPPPFVHHVTLPSLTSSSKTSSNSTIPIVAGCIAGAVFILLLATGVFFFKSKAGKSVNPWRTGLSGQLQKVFITGVPKLKRSEIEAACEDFSNVIGSCPIGTLFKGTLSSGVEIAVASVATASAKEWTNNIEMQFRKKIEMLSKINHKNFVNLLGYCEEEEPFTRILVFEYASNGTVFEHLHYKESEHLDWVMRLRIAMGIAYCLDHMHGLKPPIVHSNLLSSSVQLTEDYAVKIADFNFGYLKGPSETESSTNALIDTNISETTQEDNVHSFGLLLFELMTGKLPESVQKGDSIDTGLAVFLRGKTLREMVDPTIESFDEKIENIGEVIKSCIRADAKQRPIMKEVTGRLREITGLSPDDTIPKLSPLWWAELEVLSTA.

The first 31 residues, 1 to 31 (MSNNWKSVRLRLQNRTLVFLLVILSFGSCYS), serve as a signal peptide directing secretion. Asparagine 14 carries N-linked (GlcNAc...) asparagine glycosylation. Residues 32-146 (LKSQGDGFLE…SKTSSNSTIP (115 aa)) are Extracellular-facing. The tract at residues 80-121 (RDRPVARATPPSSSVSTRPDAKRSSTLPPPQKSPPAQHVSAP) is disordered. Residue asparagine 142 is glycosylated (N-linked (GlcNAc...) asparagine). Residues 147 to 167 (IVAGCIAGAVFILLLATGVFF) traverse the membrane as a helical segment. Residues 168–499 (FKSKAGKSVN…WAELEVLSTA (332 aa)) lie on the Cytoplasmic side of the membrane. A Protein kinase domain is found at 208–474 (EDFSNVIGSC…EVTGRLREIT (267 aa)).

The protein resides in the cell membrane. This chain is Probable inactive receptor-like protein kinase At3g56050, found in Arabidopsis thaliana (Mouse-ear cress).